We begin with the raw amino-acid sequence, 143 residues long: Hemoglobin subunit alpha (143 aa).

S2 is modified (N-acetylserine). The Globin domain maps to 2 to 143 (SLSDTDKAVV…LALALSEKYR (142 aa)). Residue H60 coordinates O2. H89 is a heme b binding site.

This sequence belongs to the globin family. As to quaternary structure, heterotetramer of two alpha chains and two beta chains. Red blood cells.

Involved in oxygen transport from gills to the various peripheral tissues. The polypeptide is Hemoglobin subunit alpha (hbaa1) (Danio rerio (Zebrafish)).